The primary structure comprises 310 residues: tRNA-cytidine(32) 2-sulfurtransferase (310 aa).

Residues 58 to 63 (SGGKDS) carry the PP-loop motif motif. C133, C136, and C224 together coordinate [4Fe-4S] cluster.

Belongs to the TtcA family. In terms of assembly, homodimer. It depends on Mg(2+) as a cofactor. [4Fe-4S] cluster serves as cofactor.

It is found in the cytoplasm. It catalyses the reaction cytidine(32) in tRNA + S-sulfanyl-L-cysteinyl-[cysteine desulfurase] + AH2 + ATP = 2-thiocytidine(32) in tRNA + L-cysteinyl-[cysteine desulfurase] + A + AMP + diphosphate + H(+). The protein operates within tRNA modification. Functionally, catalyzes the ATP-dependent 2-thiolation of cytidine in position 32 of tRNA, to form 2-thiocytidine (s(2)C32). The sulfur atoms are provided by the cysteine/cysteine desulfurase (IscS) system. In Paracidovorax citrulli (strain AAC00-1) (Acidovorax citrulli), this protein is tRNA-cytidine(32) 2-sulfurtransferase.